A 259-amino-acid chain; its full sequence is 4-hydroxy-tetrahydrodipicolinate reductase (259 aa).

NAD(+) is bound by residues 8–13 (GFKGRM), 93–95 (GTT), and 119–122 (APNF). H149 acts as the Proton donor/acceptor in catalysis. H150 lines the (S)-2,3,4,5-tetrahydrodipicolinate pocket. The Proton donor role is filled by K153. 159–160 (GT) serves as a coordination point for (S)-2,3,4,5-tetrahydrodipicolinate.

This sequence belongs to the DapB family.

It localises to the cytoplasm. It carries out the reaction (S)-2,3,4,5-tetrahydrodipicolinate + NAD(+) + H2O = (2S,4S)-4-hydroxy-2,3,4,5-tetrahydrodipicolinate + NADH + H(+). The enzyme catalyses (S)-2,3,4,5-tetrahydrodipicolinate + NADP(+) + H2O = (2S,4S)-4-hydroxy-2,3,4,5-tetrahydrodipicolinate + NADPH + H(+). The protein operates within amino-acid biosynthesis; L-lysine biosynthesis via DAP pathway; (S)-tetrahydrodipicolinate from L-aspartate: step 4/4. In terms of biological role, catalyzes the conversion of 4-hydroxy-tetrahydrodipicolinate (HTPA) to tetrahydrodipicolinate. This is 4-hydroxy-tetrahydrodipicolinate reductase from Enterococcus faecalis (strain ATCC 700802 / V583).